The primary structure comprises 362 residues: MSFNTFGHLFRVTTFGESHGVAIGCVVDGCPPLIPLTEADIQGDLDRRRPGQSRFTTQRQEADQVKILSGVMVHPETGVQVTTGTPIALLIENTDQRSKDYSDIQNKYRPGHADFTYEAKYGIRDYRGGGRSSARETATRVAAGAIARKVIAGMTVRGALVQIGPHKIDRDKWDWDEIGNNPFFCPDKDKAAFYADYLDGIRKSGSSIGAVVEIVAEGVPAGLGAPIYAKLDGDLAAALMSINAVKGVEIGDGFASAELTGEQNADEMRTGNHGPAFLSNHAGGILGGISTGQPVVARFAVKPTSSILTPRKTVDRTGHDTEILTKGRHDPCVGIRAVPVGEAMVACVLADHLLRHRGQVGG.

NADP(+)-binding residues include Arg-48 and Arg-54. FMN-binding positions include 131 to 133 (RSS), 243 to 244 (NA), Gly-287, 302 to 306 (KPTSS), and Arg-328.

This sequence belongs to the chorismate synthase family. In terms of assembly, homotetramer. It depends on FMNH2 as a cofactor.

The catalysed reaction is 5-O-(1-carboxyvinyl)-3-phosphoshikimate = chorismate + phosphate. It functions in the pathway metabolic intermediate biosynthesis; chorismate biosynthesis; chorismate from D-erythrose 4-phosphate and phosphoenolpyruvate: step 7/7. Catalyzes the anti-1,4-elimination of the C-3 phosphate and the C-6 proR hydrogen from 5-enolpyruvylshikimate-3-phosphate (EPSP) to yield chorismate, which is the branch point compound that serves as the starting substrate for the three terminal pathways of aromatic amino acid biosynthesis. This reaction introduces a second double bond into the aromatic ring system. The polypeptide is Chorismate synthase (Rhodopseudomonas palustris (strain TIE-1)).